Reading from the N-terminus, the 216-residue chain is Serine/threonine-protein phosphatase 1 (216 aa).

Residues aspartate 24, histidine 26, aspartate 53, and asparagine 79 each coordinate Mn(2+). The active-site Proton donor is histidine 80. Histidine 185 serves as a coordination point for Mn(2+).

Belongs to the PPP phosphatase family. PP-1 subfamily. Mn(2+) is required as a cofactor.

It carries out the reaction O-phospho-L-seryl-[protein] + H2O = L-seryl-[protein] + phosphate. The enzyme catalyses O-phospho-L-threonyl-[protein] + H2O = L-threonyl-[protein] + phosphate. Inhibited by cadmium, copper, zinc when added cobalt when added concomitantly with manganese. Functionally, can hydrolyze phosphorylated Ser-, Thr- or Tyr-substrates in vitro. The natural substrate is unknown. This Salmonella typhimurium (strain LT2 / SGSC1412 / ATCC 700720) protein is Serine/threonine-protein phosphatase 1 (pphA).